Reading from the N-terminus, the 392-residue chain is Phosphoglycerate kinase (392 aa).

Substrate is bound by residues 21–23 (DFN), Arg36, 59–62 (HLGR), Arg118, and Arg151. ATP-binding positions include Lys202, Glu321, and 347–350 (GGDS).

It belongs to the phosphoglycerate kinase family. In terms of assembly, monomer.

The protein localises to the cytoplasm. It carries out the reaction (2R)-3-phosphoglycerate + ATP = (2R)-3-phospho-glyceroyl phosphate + ADP. Its pathway is carbohydrate degradation; glycolysis; pyruvate from D-glyceraldehyde 3-phosphate: step 2/5. The protein is Phosphoglycerate kinase of Symbiobacterium thermophilum (strain DSM 24528 / JCM 14929 / IAM 14863 / T).